The following is a 613-amino-acid chain: Chitin synthase 8 (613 aa).

The segment at 1–73 is disordered; the sequence is MAVSPTAKRK…PAPLTRPPPP (73 aa). N17 is a glycosylation site (N-linked (GlcNAc...) asparagine). The segment covering 18-27 has biased composition (polar residues); it reads LSRQSSSART. The span at 61-73 shows a compositional bias: pro residues; it reads ESPPAPLTRPPPP. The next 2 helical transmembrane spans lie at 119 to 139 and 142 to 162; these read YSLILGFVSINAGFIWALWNY and YWYIFLPFLAANTFCQVIFAI. N-linked (GlcNAc...) asparagine glycosylation is found at N312, N421, and N471. Helical transmembrane passes span 556–576 and 583–602; these read VTTWWLGPFVVAAMFGFAIAL and IFENHIMIGLMSVLAFRYAA.

This sequence belongs to the chitin synthase family.

It localises to the cell membrane. It carries out the reaction [(1-&gt;4)-N-acetyl-beta-D-glucosaminyl](n) + UDP-N-acetyl-alpha-D-glucosamine = [(1-&gt;4)-N-acetyl-beta-D-glucosaminyl](n+1) + UDP + H(+). Functionally, polymerizes chitin, a structural polymer of the cell wall and septum, by transferring the sugar moiety of UDP-GlcNAc to the non-reducing end of the growing chitin polymer. Plays a role in cell wall integrity. Plays a key role in pathogenicity. Likely contributes to post-penetration virulence. The sequence is that of Chitin synthase 8 from Verticillium dahliae (strain VdLs.17 / ATCC MYA-4575 / FGSC 10137) (Verticillium wilt).